A 585-amino-acid polypeptide reads, in one-letter code: Glycerol-3-phosphate acyltransferase 1 (585 aa).

3 helical membrane passes run 126-146, 334-354, and 356-376; these read FFPY…AILL, TPLA…LAVF, and ISVG…MSGV. An HXXXXD motif motif is present at residues 403 to 408; the sequence is HRTLLD.

This sequence belongs to the GPAT/DAPAT family. As to expression, highly expressed in developing siliques and flower buds. Weakly or not expressed in roots, seedlings and leaves.

It localises to the membrane. Its subcellular location is the mitochondrion. It catalyses the reaction sn-glycerol 3-phosphate + an acyl-CoA = a 1-acyl-sn-glycero-3-phosphate + CoA. It participates in phospholipid metabolism; CDP-diacylglycerol biosynthesis; CDP-diacylglycerol from sn-glycerol 3-phosphate: step 1/3. Its function is as follows. Esterifies acyl-group from acyl-ACP to the sn-1 position of glycerol-3-phosphate, an essential step in glycerolipid biosynthesis. Involved in pollen development, by being required for tapetum differentiation and male fertility. In addition to the sporophytic effect, it also exerts a gametophytic effect on pollen performance. This Arabidopsis thaliana (Mouse-ear cress) protein is Glycerol-3-phosphate acyltransferase 1 (GPAT1).